The primary structure comprises 122 residues: Large ribosomal subunit protein uL14 (122 aa).

Belongs to the universal ribosomal protein uL14 family. Part of the 50S ribosomal subunit. Forms a cluster with proteins L3 and L19. In the 70S ribosome, L14 and L19 interact and together make contacts with the 16S rRNA in bridges B5 and B8.

Functionally, binds to 23S rRNA. Forms part of two intersubunit bridges in the 70S ribosome. This chain is Large ribosomal subunit protein uL14, found in Thermus aquaticus.